The chain runs to 2226 residues: DNA polymerase epsilon catalytic subunit A (2226 aa).

Positions 1240 to 1265 (RVSKVTSRKRRNGKANNVSDSEEEER) are disordered. Positions 2112, 2115, 2134, and 2137 each coordinate Zn(2+). The segment at 2112–2137 (CDYCNYIRDIDFCRDEQKNIWNCSNC) adopts a CysA-type zinc-finger fold. The [4Fe-4S] cluster site is built by Cys-2168, Cys-2171, Cys-2183, and Cys-2185. The CysB motif signature appears at 2168–2185 (CSKCHQIKSDNMSEYCKC).

Belongs to the DNA polymerase type-B family. Heterotetramer. Consists of 4 subunits: POL2, DPB2, DPB3 and DPB4. [4Fe-4S] cluster serves as cofactor.

It is found in the nucleus. The catalysed reaction is DNA(n) + a 2'-deoxyribonucleoside 5'-triphosphate = DNA(n+1) + diphosphate. Functionally, DNA polymerase II participates in chromosomal DNA replication. This is DNA polymerase epsilon catalytic subunit A (POL2) from Debaryomyces hansenii (strain ATCC 36239 / CBS 767 / BCRC 21394 / JCM 1990 / NBRC 0083 / IGC 2968) (Yeast).